A 212-amino-acid chain; its full sequence is MKLTLVQIFFMMLLLLLGLGVGLGLGLQMAAAVLEESDQLLDEFLSSDSQDKAEATKEGLDSQSTETLLVSNKVVPPEDTIVNEDDVGGDRMLRAEVLSQSNKHYLRSDVMDRECNALMAPNLKSKDHPCIPQYVFIHEEPDTVKAVCKSPAVACDLKEGKCHKSPRPFDLTFCKLSKSGQVIPHCNYVTFILEKYILMSCSDMKVQITSKS.

An N-terminal signal peptide occupies residues 1–24; it reads MKLTLVQIFFMMLLLLLGLGVGLG.

The protein belongs to the pancreatic ribonuclease family. The N-terminus is blocked. Glycosylated. Male-specific expression in proximal caput of the epididymis.

The protein resides in the secreted. Functionally, secreted proximal epididymal protein required for post-testicular sperm maturation and male fertility. May be involved in sperm adhesion to the egg zona pellucida. Does not have ribonuclease activity. This is Inactive ribonuclease-like protein 10 (RNASE10) from Ovis aries (Sheep).